The sequence spans 810 residues: Transmembrane channel-like protein 6 (810 aa).

The segment at 1–26 (MAQSLALALDVPETTGDEGLEPSPYE) is disordered. Residues 1-205 (MAQSLALALD…GAFSCCSRLR (205 aa)) lie on the Lumenal side of the membrane. A compositionally biased stretch (acidic residues) spans 15-26 (TGDEGLEPSPYE). The residue at position 88 (threonine 88) is a Phosphothreonine. Arginine 93 is subject to Omega-N-methylarginine. An N-linked (GlcNAc...) asparagine glycan is attached at asparagine 102. Phosphothreonine is present on threonine 104. Serine 136 carries the phosphoserine modification. A helical transmembrane segment spans residues 206 to 226 (YTCMLALHSLGLALLSGLYAA). The Cytoplasmic portion of the chain corresponds to 227 to 253 (RPWRYALKQIGGQFGSSVLSYFLFLKT). The chain crosses the membrane as a helical span at residues 254–274 (LLAFNALMLLPLLAFLVGVQA). Residues 275 to 338 (AFPPDPAGPV…PRLGSLPYNM (64 aa)) are Lumenal-facing. Asparagine 311 carries N-linked (GlcNAc...) asparagine glycosylation. Residues 339–359 (PLAYLFTMGATFFLTCIILVY) form a helical membrane-spanning segment. Residues 360–429 (SMSHSFGESY…PRSVCGQLRQ (70 aa)) are Cytoplasmic-facing. A helical transmembrane segment spans residues 430-450 (VVVLGLGWLLCLGSTMGCTVA). Topologically, residues 451–468 (VLTFSEVMIQRPASGGQG) are lumenal. Residues 469 to 489 (VEALALPLVVSVLNLGASYLF) form a helical membrane-spanning segment. At 490 to 504 (RGLATLERHDSPVLE) the chain is on the cytoplasmic side. The chain crosses the membrane as a helical span at residues 505–525 (VYMAICRNLILKMAVLGVLCY). The Lumenal portion of the chain corresponds to 526-552 (HWLGRRVATLQGQCWEDFVGQELYRFM). A helical membrane pass occupies residues 553-573 (VVDFIFMLLDSLFGELVWRLI). Topologically, residues 574 to 603 (SEKKLKRGQKPEFDIARNVLDLIYGQTLTW) are cytoplasmic. A helical membrane pass occupies residues 604-624 (LGVLFSPLLPAVQILRLLFLF). Topologically, residues 625–649 (HIKKASLMANCQAPRRPWLASHMST) are lumenal. A helical membrane pass occupies residues 650-670 (VFLTLLCFPSFLGAAVFLCYA). Residues 671–721 (VWQVRPSSTCGPFRTLNTMYEAGTVWVRRLEHAGSGASWLPWLHHFLVENT) are Cytoplasmic-facing. A helical transmembrane segment spans residues 722 to 742 (FFLFLASALLLAVIYFNIQVV). At 743-810 (KGQRKVICLL…QKEPCNPRSP (68 aa)) the chain is on the lumenal side. Residues 775-810 (EEEGRSRPGRTQDATEPPAWHEDGGDQKEPCNPRSP) are disordered. Residues 793 to 810 (AWHEDGGDQKEPCNPRSP) are compositionally biased toward basic and acidic residues.

The protein belongs to the TMC family. In terms of assembly, interacts with TMC8. Interacts and forms a complex with TMC8 and CIB1; the interaction stabilizes each component of the complex. Interacts and forms a complex with TMC8 and SLC30A1/ZNT1; the interaction regulates zinc transport into the ER. Widely expressed. Highly expressed in thymus, lung and spleen. Expressed in lymphocytes and peripheral lymphocytes. Expressed in small and medium dorsal root ganglion (DRG) neurons.

The protein resides in the endoplasmic reticulum membrane. Acts as a regulatory protein involved in the regulation of numerous cellular processes. Together with its homolog TMC8/EVER2, forms a complex with calcium-binding protein CIB1 in lymphocytes and keratynocytes where TMC6 and TMC8 stabilize CIB1 and reciprocally. Together with TMC8, also forms a complex with and activates zinc transporter ZNT1 at the ER membrane of keratynocytes, thereby facilitating zinc uptake into the ER. Down-regulates the activity of transcription factors induced by zinc and cytokines. Also plays a role in thermal sensation by inhibiting the M-channel (KCNQ2-KCNQ3 channel) current in primary sensory neurons. This chain is Transmembrane channel-like protein 6, found in Mus musculus (Mouse).